A 459-amino-acid polypeptide reads, in one-letter code: V-type ATP synthase beta chain (459 aa).

Belongs to the ATPase alpha/beta chains family.

Functionally, produces ATP from ADP in the presence of a proton gradient across the membrane. The V-type beta chain is a regulatory subunit. The polypeptide is V-type ATP synthase beta chain (Clostridium botulinum (strain Alaska E43 / Type E3)).